A 502-amino-acid chain; its full sequence is Cardiolipin synthase (502 aa).

Transmembrane regions (helical) follow at residues Val-7–Gly-27, Leu-29–Ser-49, and Ile-59–Phe-79. PLD phosphodiesterase domains lie at Ile-237 to Tyr-264 and Glu-415 to Ser-442. Active-site residues include His-242, Lys-244, Asp-249, His-420, Lys-422, and Asp-427.

The protein belongs to the phospholipase D family. Cardiolipin synthase subfamily.

The protein resides in the cell membrane. It carries out the reaction 2 a 1,2-diacyl-sn-glycero-3-phospho-(1'-sn-glycerol) = a cardiolipin + glycerol. Its function is as follows. Catalyzes the reversible phosphatidyl group transfer from one phosphatidylglycerol molecule to another to form cardiolipin (CL) (diphosphatidylglycerol) and glycerol. This Geobacillus kaustophilus (strain HTA426) protein is Cardiolipin synthase (cls).